Consider the following 119-residue polypeptide: Large ribosomal subunit protein bL20 (119 aa).

Belongs to the bacterial ribosomal protein bL20 family.

Binds directly to 23S ribosomal RNA and is necessary for the in vitro assembly process of the 50S ribosomal subunit. It is not involved in the protein synthesizing functions of that subunit. The sequence is that of Large ribosomal subunit protein bL20 from Dehalococcoides mccartyi (strain ATCC BAA-2100 / JCM 16839 / KCTC 5957 / BAV1).